Reading from the N-terminus, the 576-residue chain is MAGUK p55 subfamily member 7 (576 aa).

L27 domains are found at residues 10–63 (SDTG…YEKE) and 65–122 (PMPV…YDPV). One can recognise a PDZ domain in the interval 139–220 (IIRLVKNREP…AITFKIIPSI (82 aa)). Residues 228 to 298 (DGKMFVKALF…PSKQFQERRF (71 aa)) enclose the SH3 domain. The region spanning 368–560 (YRLVILVGPV…AYNELRSTLE (193 aa)) is the Guanylate kinase-like domain.

The protein belongs to the MAGUK family.

The protein resides in the membrane. It is found in the cell junction. It localises to the tight junction. Its subcellular location is the adherens junction. Acts as an important adapter that promotes epithelial cell polarity and tight junction formation. Involved in the assembly of protein complexes at sites of cell-cell contact. This chain is MAGUK p55 subfamily member 7 (mpp7), found in Xenopus tropicalis (Western clawed frog).